Consider the following 231-residue polypeptide: 3-oxoadipate CoA-transferase subunit A (231 aa).

25–31 serves as a coordination point for CoA; that stretch reads GGFGTAG.

This sequence belongs to the 3-oxoacid CoA-transferase subunit A family. In terms of assembly, heterodimer.

The enzyme catalyses 3-oxoadipate + succinyl-CoA = 3-oxoadipyl-CoA + succinate. It participates in aromatic compound metabolism; beta-ketoadipate pathway; acetyl-CoA and succinyl-CoA from 3-oxoadipate: step 1/2. The protein is 3-oxoadipate CoA-transferase subunit A (pcaI) of Pseudomonas putida (Arthrobacter siderocapsulatus).